The primary structure comprises 98 residues: MSVYKYYDLIKKPIITEKTTSISEQNKYTFYVNKFAKKLTIKKAIEAIFKVKVKKVNILNIQGKKKRFKGIIGTQINQKKAIVTLEKDHNIDYAGGIK.

The protein belongs to the universal ribosomal protein uL23 family. In terms of assembly, part of the 50S ribosomal subunit. Contacts protein L29, and trigger factor when it is bound to the ribosome.

Its function is as follows. One of the early assembly proteins it binds 23S rRNA. One of the proteins that surrounds the polypeptide exit tunnel on the outside of the ribosome. Forms the main docking site for trigger factor binding to the ribosome. This Rickettsia typhi (strain ATCC VR-144 / Wilmington) protein is Large ribosomal subunit protein uL23.